The primary structure comprises 306 residues: Metal ABC transporter substrate-binding lipoprotein SloC (306 aa).

The N-terminal stretch at 1–19 (MKKLSLLLLVCLSLLGLFA) is a signal peptide. Cys20 is lipidated: N-palmitoyl cysteine. Cys20 carries S-diacylglycerol cysteine lipidation. 4 residues coordinate a divalent metal cation: His64, His136, Glu202, and Asp277.

This sequence belongs to the bacterial solute-binding protein 9 family. Lipoprotein receptor antigen (Lrai) subfamily.

It localises to the cell membrane. In terms of biological role, part of the ATP-binding cassette (ABC) transport system SloABC involved in metal import. Binds a metal with high affinity and specificity and delivers it to the membrane permease for translocation into the cytoplasm. May act as an adhesin which is involved on adherence to extracellular matrix. It is an important factor in pathogenesis and infection. May contribute to the formation and accumulation of dental plaque. In Streptococcus mutans serotype c (strain ATCC 700610 / UA159), this protein is Metal ABC transporter substrate-binding lipoprotein SloC (sloC).